We begin with the raw amino-acid sequence, 234 residues long: Leucyl/phenylalanyl-tRNA--protein transferase (234 aa).

The protein belongs to the L/F-transferase family.

Its subcellular location is the cytoplasm. The enzyme catalyses N-terminal L-lysyl-[protein] + L-leucyl-tRNA(Leu) = N-terminal L-leucyl-L-lysyl-[protein] + tRNA(Leu) + H(+). The catalysed reaction is N-terminal L-arginyl-[protein] + L-leucyl-tRNA(Leu) = N-terminal L-leucyl-L-arginyl-[protein] + tRNA(Leu) + H(+). It carries out the reaction L-phenylalanyl-tRNA(Phe) + an N-terminal L-alpha-aminoacyl-[protein] = an N-terminal L-phenylalanyl-L-alpha-aminoacyl-[protein] + tRNA(Phe). In terms of biological role, functions in the N-end rule pathway of protein degradation where it conjugates Leu, Phe and, less efficiently, Met from aminoacyl-tRNAs to the N-termini of proteins containing an N-terminal arginine or lysine. The polypeptide is Leucyl/phenylalanyl-tRNA--protein transferase (Escherichia coli O7:K1 (strain IAI39 / ExPEC)).